The chain runs to 116 residues: Large ribosomal subunit protein uL18 (116 aa).

Belongs to the universal ribosomal protein uL18 family. In terms of assembly, part of the 50S ribosomal subunit; part of the 5S rRNA/L5/L18/L25 subcomplex. Contacts the 5S and 23S rRNAs.

Its function is as follows. This is one of the proteins that bind and probably mediate the attachment of the 5S RNA into the large ribosomal subunit, where it forms part of the central protuberance. This Acinetobacter baumannii (strain AB307-0294) protein is Large ribosomal subunit protein uL18.